An 871-amino-acid polypeptide reads, in one-letter code: Alanine--tRNA ligase (871 aa).

His-590, His-594, Cys-694, and His-698 together coordinate Zn(2+).

This sequence belongs to the class-II aminoacyl-tRNA synthetase family. It depends on Zn(2+) as a cofactor.

It localises to the cytoplasm. The catalysed reaction is tRNA(Ala) + L-alanine + ATP = L-alanyl-tRNA(Ala) + AMP + diphosphate. In terms of biological role, catalyzes the attachment of alanine to tRNA(Ala) in a two-step reaction: alanine is first activated by ATP to form Ala-AMP and then transferred to the acceptor end of tRNA(Ala). Also edits incorrectly charged Ser-tRNA(Ala) and Gly-tRNA(Ala) via its editing domain. The protein is Alanine--tRNA ligase of Thermoplasma acidophilum (strain ATCC 25905 / DSM 1728 / JCM 9062 / NBRC 15155 / AMRC-C165).